Here is a 684-residue protein sequence, read N- to C-terminus: Translation factor GUF1 homolog, mitochondrial (684 aa).

One can recognise a tr-type G domain in the interval 82–270; sequence HLIRNFSIIA…AVIERIPQPK (189 aa). GTP-binding positions include 91–98, 163–167, and 217–220; these read AHVDHGKS, DTPGH, and NKID.

Belongs to the TRAFAC class translation factor GTPase superfamily. Classic translation factor GTPase family. LepA subfamily.

It localises to the mitochondrion inner membrane. The catalysed reaction is GTP + H2O = GDP + phosphate + H(+). Its function is as follows. Promotes mitochondrial protein synthesis. May act as a fidelity factor of the translation reaction, by catalyzing a one-codon backward translocation of tRNAs on improperly translocated ribosomes. Binds to mitochondrial ribosomes in a GTP-dependent manner. In Physcomitrium patens (Spreading-leaved earth moss), this protein is Translation factor GUF1 homolog, mitochondrial.